We begin with the raw amino-acid sequence, 513 residues long: Xylose import ATP-binding protein XylG (513 aa).

ABC transporter domains are found at residues 5 to 242 and 259 to 505; these read LEMK…VGRE and LRIE…LRSE. 37-44 is an ATP binding site; it reads GENGSGKS.

Belongs to the ABC transporter superfamily. Xylose importer (TC 3.A.1.2.4) family. The complex is composed of two ATP-binding proteins (XylG), two transmembrane proteins (XylH) and a solute-binding protein (XylF).

Its subcellular location is the cell inner membrane. It catalyses the reaction D-xylose(out) + ATP + H2O = D-xylose(in) + ADP + phosphate + H(+). Its function is as follows. Part of the ABC transporter complex XylFGH involved in xylose import. Responsible for energy coupling to the transport system. The protein is Xylose import ATP-binding protein XylG of Shigella boydii serotype 4 (strain Sb227).